The following is a 1076-amino-acid chain: Hormone-sensitive lipase (1076 aa).

Composition is skewed to polar residues over residues 1-12 (MEPGSKSVSRSD) and 38-64 (ESKTLQGSNTQQKPASNQRPLTQQETP). Disordered regions lie at residues 1–198 (MEPG…KSKQ) and 229–250 (VTDSESESDVGSSSDTDSPATM). A compositionally biased stretch (basic and acidic residues) spans 65–77 (AQHDAESQKEPRA). The segment covering 94–116 (APQQSPYIQRVLLTQQEAASQQG) has biased composition (polar residues). Positions 140 to 149 (GPGPGEPPPA) are enriched in pro residues. Residues 150–161 (QQEAESTPAAQA) are compositionally biased toward low complexity. The segment covering 172 to 198 (PTESTSQETPEQSDKQTTPVQGAKSKQ) has biased composition (polar residues). Residues 237–246 (DVGSSSDTDS) show a composition bias toward low complexity. Residues 651–653 (HGG) carry the Involved in the stabilization of the negatively charged intermediate by the formation of the oxyanion hole motif. Residue Ser-725 is part of the active site. The segment at 838–930 (KSQKMSEPIA…EAEAKNELSP (93 aa)) is disordered. A Phosphoserine modification is found at Ser-853. Ser-855 carries the post-translational modification Phosphoserine; by AMPK. Polar residues predominate over residues 882-908 (RGNSETSSDTPEMSLSAETLSPSTPSD). A phosphoserine mark is found at Ser-897, Ser-929, Ser-950, and Ser-951. Catalysis depends on residues Asp-994 and His-1024. Residues 1055–1076 (AGAGPSGETGAAGVDGGCGGRH) form a disordered region. Over residues 1067 to 1076 (GVDGGCGGRH) the composition is skewed to gly residues.

It belongs to the 'GDXG' lipolytic enzyme family. In terms of assembly, monomer and homodimer. Interacts with CAVIN1 in the adipocyte cytoplasm. Interacts with PLIN5. Post-translationally, phosphorylation by AMPK reduces its translocation towards the lipid droplets. As to expression, testis.

The protein resides in the cell membrane. It localises to the membrane. Its subcellular location is the caveola. The protein localises to the cytoplasm. It is found in the cytosol. The protein resides in the lipid droplet. The enzyme catalyses a diacylglycerol + H2O = a monoacylglycerol + a fatty acid + H(+). The catalysed reaction is a triacylglycerol + H2O = a diacylglycerol + a fatty acid + H(+). It carries out the reaction a monoacylglycerol + H2O = glycerol + a fatty acid + H(+). It catalyses the reaction Hydrolyzes glycerol monoesters of long-chain fatty acids.. The enzyme catalyses 1,2-di-(9Z-octadecenoyl)-glycerol + (9Z)-octadecenoate + H(+) = 1,2,3-tri-(9Z-octadecenoyl)-glycerol + H2O. The catalysed reaction is 2,3-di-(9Z)-octadecenoyl-sn-glycerol + H2O = 2-(9Z-octadecenoyl)-glycerol + (9Z)-octadecenoate + H(+). It carries out the reaction cholesteryl (9Z-octadecenoate) + H2O = cholesterol + (9Z)-octadecenoate + H(+). It catalyses the reaction 1,2,3-tri-(9Z-octadecenoyl)-glycerol + H2O = di-(9Z)-octadecenoylglycerol + (9Z)-octadecenoate + H(+). The enzyme catalyses all-trans-retinyl hexadecanoate + H2O = all-trans-retinol + hexadecanoate + H(+). The catalysed reaction is 1,2-di-(9Z-octadecenoyl)-glycerol + H2O = (9Z-octadecenoyl)-glycerol + (9Z)-octadecenoate + H(+). It carries out the reaction 2-(5Z,8Z,11Z,14Z-eicosatetraenoyl)-glycerol + H2O = glycerol + (5Z,8Z,11Z,14Z)-eicosatetraenoate + H(+). It catalyses the reaction 1-(9Z-octadecenoyl)-glycerol + H2O = glycerol + (9Z)-octadecenoate + H(+). The enzyme catalyses 2-(9Z-octadecenoyl)-glycerol + H2O = glycerol + (9Z)-octadecenoate + H(+). The catalysed reaction is 1-O-hexadecyl-2-acetyl-sn-glycerol + H2O = 1-O-hexadecyl-sn-glycerol + acetate + H(+). It carries out the reaction 1,2-di-(9Z-octadecenoyl)-sn-glycerol + H2O = (9Z-octadecenoyl)-glycerol + (9Z)-octadecenoate + H(+). It catalyses the reaction 1,3-di-(9Z-octadecenoyl)-glycerol + H2O = 1-(9Z-octadecenoyl)-glycerol + (9Z)-octadecenoate + H(+). The enzyme catalyses 1,2-di-(9Z-octadecenoyl)-glycerol + H2O = 2-(9Z-octadecenoyl)-glycerol + (9Z)-octadecenoate + H(+). The protein operates within glycerolipid metabolism; triacylglycerol degradation. Its activity is regulated as follows. Retinyl ester hydrolase is inhibited by bis-p-nitrophenyl phosphate. Its function is as follows. Lipase with broad substrate specificity, catalyzing the hydrolysis of triacylglycerols (TAGs), diacylglycerols (DAGs), monoacylglycerols (MAGs), cholesteryl esters and retinyl esters. Shows a preferential hydrolysis of DAGs over TAGs and MAGs and preferentially hydrolyzes the fatty acid (FA) esters at the sn-3 position of the glycerol backbone in DAGs. Preferentially hydrolyzes FA esters at the sn-1 and sn-2 positions of the glycerol backbone in TAGs. Catalyzes the hydrolysis of 2-arachidonoylglycerol, an endocannabinoid and of 2-acetyl monoalkylglycerol ether, the penultimate precursor of the pathway for de novo synthesis of platelet-activating factor. In adipose tissue and heart, it primarily hydrolyzes stored triglycerides to free fatty acids, while in steroidogenic tissues, it principally converts cholesteryl esters to free cholesterol for steroid hormone production. This chain is Hormone-sensitive lipase (LIPE), found in Homo sapiens (Human).